The primary structure comprises 428 residues: MSSSLPPSSCDCFVSLPPASLSSFVLFGKNSDRPRDEVQEIVYYPAASHPLGSKVKCTFIEVEQVRETLAVVLSRPAWLWGAEMGANEMGVCIGNEAVWTKEPVTEGEALLGMDLVRLALERGPSAQKAVQVITELLGEYGQGGSCREEPEPFIYHNTFLLCDRSEAYVLETAGPYWAAERIVEGARNLSNQLSISVCPWSEHPQLRSHALQQGWWDGQGEFNFSVVYSLEKQPERMAAAKLRYRAGQELLRMQEGHMTVKSMQSILRDKESGICMDSGGFRTTSSMVSVLPRSPHEPCIHLLSATPDPSRSVYKPFMFSPRVTQVPWVLSPTFGEQDPVNQIPRFQTQVDRRHELYRQHQRALEACKGNKEAEETLRQKQLKVEEENLHWVDTFLDTSKSADPVGGSDIFRICVEKELALYKETGEK.

C10 is an active-site residue.

The protein belongs to the peptidase C69 family. Secernin subfamily.

This Xenopus laevis (African clawed frog) protein is Secernin-2 (scrn2).